The following is a 174-amino-acid chain: RNA pyrophosphohydrolase (174 aa).

The Nudix hydrolase domain maps to 6–149 (GFRANVGIVI…KREVYRRAMK (144 aa)). Residues 38 to 59 (GGIDEGETAEQTMYRELYEEVG) carry the Nudix box motif.

Belongs to the Nudix hydrolase family. RppH subfamily. A divalent metal cation is required as a cofactor.

Its function is as follows. Accelerates the degradation of transcripts by removing pyrophosphate from the 5'-end of triphosphorylated RNA, leading to a more labile monophosphorylated state that can stimulate subsequent ribonuclease cleavage. The sequence is that of RNA pyrophosphohydrolase from Pseudoalteromonas atlantica (strain T6c / ATCC BAA-1087).